Reading from the N-terminus, the 427-residue chain is MMGKLPLGVVSPYVKMSSGGCSDPLKFYATSYCTAYGREEFKPRLGSHVGTGYKSNYRPLVSYQPHLDTLDNPAIGQQIRDTSKSVTSQSYSPLEVPDGKQPLPWNLHQTTSSYGREKLNPGPHSKEVRKVHFDTQDHGPQTITGLEPKEVPLIHQQQGKGSTEWENSHYGPRFMTSEYNSKYIKESPNHPDLLLKKTIGSKEETGFTEESTKNPIVFQPPSQAFPGDPVLHPGRSITKSDYLPVTHPQGSDFLPVLSRGSDRDTGFSRVNERTLNPRVPTPAPQPASMSHRSYQPPQRMQQTNVALLGRESVGNKEPTGFTLNNPSYVRSSYEQDRDQRYLTTYNQGYFENIPKGLDREGWTRGGIQPQKAGAYALSELNNHTLMDSTPNPTETLRHLHPHVGRTLASVDPFYRDMPHSSRYPASS.

Disordered stretches follow at residues 82-105 (TSKS…PLPW), 273-298 (RTLN…QPPQ), and 314-335 (GNKE…SYEQ). Composition is skewed to polar residues over residues 287 to 298 (ASMSHRSYQPPQ) and 321 to 332 (FTLNNPSYVRSS).

Microtubule inner protein component of sperm flagellar doublet microtubules. Interacts with PPP1CA.

Its subcellular location is the cell projection. It is found in the cilium. The protein resides in the cytoplasm. The protein localises to the cytoskeleton. It localises to the flagellum axoneme. The chain is Stabilizer of axonemal microtubules 4 from Mus musculus (Mouse).